We begin with the raw amino-acid sequence, 539 residues long: Putative serine/threonine-protein kinase L670 (539 aa).

In terms of domain architecture, Cyclin N-terminal spans 1-115; the sequence is MSLFNNHPEL…ILKVFKFGLH (115 aa). The 262-residue stretch at 258–519 folds into the Protein kinase domain; sequence MNVIEKLGIG…VLKIFSECFV (262 aa). ATP contacts are provided by residues 264–272 and lysine 285; that span reads LGIGSFGLV. Aspartate 375 (proton acceptor) is an active-site residue.

The protein belongs to the protein kinase superfamily. Ser/Thr protein kinase family.

The catalysed reaction is L-seryl-[protein] + ATP = O-phospho-L-seryl-[protein] + ADP + H(+). It catalyses the reaction L-threonyl-[protein] + ATP = O-phospho-L-threonyl-[protein] + ADP + H(+). This is Putative serine/threonine-protein kinase L670 from Acanthamoeba polyphaga mimivirus (APMV).